Reading from the N-terminus, the 348-residue chain is Calcium/calmodulin-dependent protein kinase type 1 (348 aa).

The Nuclear localization signal 1 motif lies at Arg7–Tyr22. The Protein kinase domain occupies Tyr22–Ile278. ATP-binding positions include Leu28–Val36 and Lys52. Positions Lys71–His78 match the Nuclear localization signal 2 motif. The Proton acceptor role is filled by Asp144. Thr179 carries the post-translational modification Phosphothreonine; by ckk-1. An autoinhibitory domain region spans residues Ile278 to Leu318. A Nuclear export sequence motif is present at residues Ile288 to Val294. The Nuclear localization signal 3 signature appears at Lys297–Lys307. Positions Lys298 to Gln319 are calmodulin-binding. Polar residues predominate over residues Ser327 to Gln338. The segment at Ser327 to Ala348 is disordered. The span at Pro339–Ala348 shows a compositional bias: pro residues.

It belongs to the protein kinase superfamily. CAMK Ser/Thr protein kinase family. CaMK subfamily. In terms of assembly, interacts with importin ima-3; affinity for ima-3 is increased in the presence of Ca(2+) and calmodulin and leads to increased nuclear accumulation of cmk-1 in FLP neurons upon prolonged heat activation. It depends on Mg(2+) as a cofactor. In terms of processing, phosphorylation at Thr-179 can promote both nuclear export and import, sustaining nucleocytoplasmic shuttling. As to expression, expressed in head and tail neurons and vulval muscles. Throughout the nervous system. Detected in neurites and neuronal cell bodies. Expressed in the mechanosensory neurons, AVM and ALM, and in the interneurons, AVA, AVB and AVD. Expressed in the right and left ASE neurons where it functions cell-autonomously to control salt-avoidance learning. Expressed in FLP and AFD thermosensory neurons.

Its subcellular location is the nucleus. The protein resides in the cytoplasm. It catalyses the reaction L-seryl-[protein] + ATP = O-phospho-L-seryl-[protein] + ADP + H(+). The enzyme catalyses L-threonyl-[protein] + ATP = O-phospho-L-threonyl-[protein] + ADP + H(+). Activated by Ca(2+)/calmodulin. Binding of calmodulin results in a conformational change that generates functional binding sites for both substrate and ATP, and thus relieves autoinhibition and lowers the Km of substrate binding. Must be phosphorylated by ckk-1 to be maximally active but this does not appear to be required for activity in AFD neurons. In terms of biological role, calcium/calmodulin-dependent protein kinase that operates in the calcium-triggered CaMKK-CaMK1 signaling cascade which results in transcriptional activation. Transcriptional activation occurs at least in part through phosphorylation of crh-1. Regulates gene expression, sensory morphology, and function of the AFD thermosensory neurons. Involved in long-term adaptation of AFD neurons to temperatures warmer than the initial acclimatized cultivation temperature. Acts in the FLP thermal nociceptors to moderate the responsiveness to noxious heat and controls neuropeptide release from FLP neurons in response to temperature elevations. Regulates the dauer decision, the decision of the larvae to enter into the alternative stress-resistant and long-lived dauer developmental stage, based on the feeding state, primarily in the AWC sensory neurons. Acts non cell-autonomously in the AWC neurons to regulate expression of the daf-28 insulin-like peptide and cell-autonomously in the ASI sensory neurons to regulate expression of the growth promoting daf-7 in a food-regulated manner. Plays a role in memory-based thermal response of an individual AFD neuron cell. Influences habituation and sensitivity to repeated mechanosensory stimuli. Involved in chemotaxis response in AWC neurons to attractant 2-heptanone, a volatile organic compound emitted by the nematode pathogenic bacterium B.nematocida B16. Acts in the ASE salt-sensing neurons to promote a type of aversive gustatory-associated learning called salt-avoidance learning via regulation of crh-1 signaling and the promotion of long-term memory formation, but is not involved in salt attraction. Represses transcription of glutamate receptor glr-1 in the nucleus basally and in response to changes in synaptic activity. The polypeptide is Calcium/calmodulin-dependent protein kinase type 1 (Caenorhabditis elegans).